We begin with the raw amino-acid sequence, 219 residues long: Protein-L-isoaspartate O-methyltransferase (219 aa).

Residue Ser66 is part of the active site.

Belongs to the methyltransferase superfamily. L-isoaspartyl/D-aspartyl protein methyltransferase family.

Its subcellular location is the cytoplasm. It catalyses the reaction [protein]-L-isoaspartate + S-adenosyl-L-methionine = [protein]-L-isoaspartate alpha-methyl ester + S-adenosyl-L-homocysteine. Catalyzes the methyl esterification of L-isoaspartyl residues in peptides and proteins that result from spontaneous decomposition of normal L-aspartyl and L-asparaginyl residues. It plays a role in the repair and/or degradation of damaged proteins. This Xanthobacter autotrophicus (strain ATCC BAA-1158 / Py2) protein is Protein-L-isoaspartate O-methyltransferase.